Consider the following 230-residue polypeptide: Gilatoxin (230 aa).

The 230-residue stretch at 1 to 230 (IIGGQECDET…ISFLFWIQSI (230 aa)) folds into the Peptidase S1 domain. 5 disulfides stabilise this stretch: cysteine 7-cysteine 146, cysteine 26-cysteine 42, cysteine 125-cysteine 193, cysteine 157-cysteine 172, and cysteine 183-cysteine 208. Histidine 41 acts as the Charge relay system in catalysis. The N-linked (GlcNAc...) asparagine glycan is linked to asparagine 84. Aspartate 93 acts as the Charge relay system in catalysis. The active-site Charge relay system is serine 187.

It belongs to the peptidase S1 family. Post-translationally, extensively glycosylated, contains approximately 8 mol of monosaccharide per mol of toxin. As to expression, expressed by the mandibular venom gland.

The protein resides in the secreted. Its function is as follows. Has kallikrein-like activity, releases bradykinin from kininogen. Catalyzes the hydrolysis of various arginine ester substrates for trypsin and thrombin and degrades both angiotensin I and II by cleavage of the dipeptide Asp-Arg from the NH2-terminal end. Fibrinogen is also degraded but a fibrin clot is not produced. May have a potentiating effect on potent hemorrhagic toxins present in the venom. This Heloderma horridum horridum (Mexican beaded lizard) protein is Gilatoxin.